The chain runs to 78 residues: MALKKPENMHYEEAIDELENIVNHLEVGDLALEDALKQFERGIALARSNNQKLQKAQQQVNILMQQDAQAPLQEFNDE.

Belongs to the XseB family. Heterooligomer composed of large and small subunits.

It is found in the cytoplasm. The enzyme catalyses Exonucleolytic cleavage in either 5'- to 3'- or 3'- to 5'-direction to yield nucleoside 5'-phosphates.. Bidirectionally degrades single-stranded DNA into large acid-insoluble oligonucleotides, which are then degraded further into small acid-soluble oligonucleotides. The sequence is that of Exodeoxyribonuclease 7 small subunit from Psychromonas ingrahamii (strain DSM 17664 / CCUG 51855 / 37).